A 142-amino-acid chain; its full sequence is Transcriptional regulator MraZ (142 aa).

SpoVT-AbrB domains lie at 5–51 (ASAL…PRPE) and 77–120 (AMDV…DSQT).

It belongs to the MraZ family. Forms oligomers.

It localises to the cytoplasm. The protein localises to the nucleoid. This chain is Transcriptional regulator MraZ, found in Burkholderia ambifaria (strain MC40-6).